The following is a 356-amino-acid chain: Glutamine synthetase cytosolic isozyme 1-4 (356 aa).

An N-acetylserine modification is found at serine 2. A phosphoserine mark is found at serine 2 and serine 48. Residues 19 to 99 (IIAEYIWIGG…VMCDAYTPAG (81 aa)) enclose the GS beta-grasp domain. The interval 37–66 (ARTLPGPVTDPSQLPKWNYDGSSTGQAPGD) is disordered. One can recognise a GS catalytic domain in the interval 106-356 (KRHAAAKIFE…IAESTILWKP (251 aa)).

The protein belongs to the glutamine synthetase family. As to quaternary structure, homooctamer. Interacts with GRF3. As to expression, expressed in the pericycle in the region of lateral root emergence.

The protein resides in the cytoplasm. It catalyses the reaction L-glutamate + NH4(+) + ATP = L-glutamine + ADP + phosphate + H(+). Its function is as follows. High-affinity glutamine synthetase. May contribute to the homeostatic control of glutamine synthesis in roots. This is Glutamine synthetase cytosolic isozyme 1-4 from Arabidopsis thaliana (Mouse-ear cress).